The chain runs to 233 residues: MIELKHVTFGYNKKQMVLQDINITIPDGENVGILGESGCGKSTLASLVLGLFKPVKGEIYLSDNAVLTIFQHPLTSFNPDWTIETSLKEALYYYRGLTDNTAQDQLLLQHLSTFELNAQLLTKLPSEVSGGQLQRFNVMRSLLAQPRVLICDEITSNLDVIAEQNVINILKAQTITNLNHFIVISHDLSVLQRLVNRIIVLKDGMIVDDFAIEELFNVDRHPYTKELVQTFSY.

The 227-residue stretch at 2–228 (IELKHVTFGY…DRHPYTKELV (227 aa)) folds into the ABC transporter domain. 35–42 (GESGCGKS) provides a ligand contact to ATP.

Belongs to the ABC transporter superfamily. As to quaternary structure, the complex is composed of two ATP-binding proteins (NikD and NikE), two transmembrane proteins (NikB and NikC) and a solute-binding protein (NikA).

The protein resides in the cell membrane. It catalyses the reaction Ni(2+)(out) + ATP + H2O = Ni(2+)(in) + ADP + phosphate + H(+). Its function is as follows. Part of the ABC transporter complex NikABCDE (Opp2) involved in nickel import. Probably responsible for energy coupling to the transport system. This chain is Nickel import system ATP-binding protein NikE, found in Staphylococcus aureus (strain Mu50 / ATCC 700699).